The primary structure comprises 510 residues: Putative thymidine phosphorylase (510 aa).

The protein belongs to the thymidine/pyrimidine-nucleoside phosphorylase family. Type 2 subfamily.

It catalyses the reaction thymidine + phosphate = 2-deoxy-alpha-D-ribose 1-phosphate + thymine. The polypeptide is Putative thymidine phosphorylase (Nitrobacter hamburgensis (strain DSM 10229 / NCIMB 13809 / X14)).